Consider the following 472-residue polypeptide: Carboxypeptidase E (472 aa).

Positions 1 to 21 are cleaved as a signal peptide; it reads MLHAMRPVLLVAALLAVTAHA. Residues 39-359 form the Peptidase M14 domain; the sequence is HYHNQAQLEA…KSIFEYVWKS (321 aa). 2 residues coordinate Zn(2+): His-101 and Glu-104. N-linked (GlcNAc...) asparagine glycosylation is present at Asn-134. A Zn(2+)-binding site is contributed by His-232. Residue Glu-329 is the Proton donor/acceptor of the active site. Asn-385 and Asn-428 each carry an N-linked (GlcNAc...) asparagine glycan.

This sequence belongs to the peptidase M14 family. It depends on Zn(2+) as a cofactor. Expression is restricted to the nervous system.

The protein localises to the cell projection. The protein resides in the axon. Its subcellular location is the perikaryon. It localises to the cytoplasmic vesicle. It is found in the secretory vesicle lumen. The enzyme catalyses Release of C-terminal arginine or lysine residues from polypeptides.. Functionally, during FMRFamide-like peptide (FaRPs or FLP) and neuropeptide-like protein (NLP) precursor processing, catalyzes the removal of Arg or Lys residues from the C-terminus following the initial endoprotease cleavage. By processing neuropeptides, modulates basal acetylcholine release at the ventral cord neuromuscular junctions. Involved in egg-laying, defecation and locomotion. By processing FLP neuropeptides, regulates the turning step of male mating behavior. Involved in reducing pharyngeal pumping in response to high CO(2) levels. This chain is Carboxypeptidase E, found in Caenorhabditis elegans.